A 201-amino-acid polypeptide reads, in one-letter code: NAD(P)H-dependent FMN reductase ntnL (201 aa).

Residues arginine 12, 90 to 93, and tyrosine 120 contribute to the FMN site; that span reads EYNG.

Homodimer.

It catalyses the reaction FMNH2 + NADP(+) = FMN + NADPH + 2 H(+). The enzyme catalyses FMNH2 + NAD(+) = FMN + NADH + 2 H(+). Its pathway is secondary metabolite biosynthesis; terpenoid biosynthesis. Its function is as follows. NAD(P)H-dependent FMN reductase; part of the gene cluster that mediates the biosynthesis of the meroterpenoids nectripenoids A and B, as well as cochliquninone D and isocochliquninone E. The pathway probably begins with the HR-PKS ntnH that catalyzes two chain-extension steps to form a reduced triketide, which then primes the SAT domain in the NR-PKS ntnG to initiate three more cycles of extension to give a linear hexaketide corresponding to the polyketide part of nectripenoids. The FAD-dependent monooxygenase ntnJ then performs an oxidative decarboxylation at C11 of the ntnH/ntnG product, via an electrophilic aromatic hydroxylation with concomitant ipso-decarboxylation. The membrane-bound polyprenyl transferase ntnF then introduces a farnesyl group before the FAD-dependent monooxygenase ntnK functions as the first epoxidase on terminal C12'-C13' olefin, followed by a second epoxidation on C7'-C8' catalyzed by ntnA. The terpene cyclase/mutase ntnI then initiates the sequential tricyclic ring formation through protonation of the terminal epoxide and catalyzes the regioselective and stereoselective 6/6/6-tricyclic ring formation. The cytochrome P450 monooxygenase ntnM may then hydroxylate C1'. This is NAD(P)H-dependent FMN reductase ntnL from Nectria sp.